Consider the following 145-residue polypeptide: Ribonuclease P protein component (145 aa).

The disordered stretch occupies residues 121-145 (PAAAGTMPPARTVHPSSLSPTEPEL). Polar residues predominate over residues 134–145 (HPSSLSPTEPEL).

The protein belongs to the RnpA family. Consists of a catalytic RNA component (M1 or rnpB) and a protein subunit.

The catalysed reaction is Endonucleolytic cleavage of RNA, removing 5'-extranucleotides from tRNA precursor.. Its function is as follows. RNaseP catalyzes the removal of the 5'-leader sequence from pre-tRNA to produce the mature 5'-terminus. It can also cleave other RNA substrates such as 4.5S RNA. The protein component plays an auxiliary but essential role in vivo by binding to the 5'-leader sequence and broadening the substrate specificity of the ribozyme. The polypeptide is Ribonuclease P protein component (Xanthomonas axonopodis pv. citri (strain 306)).